Consider the following 275-residue polypeptide: Large ribosomal subunit protein uL2 (275 aa).

The span at 38-53 shows a compositional bias: polar residues; that stretch reads SSKAGRNNNGRITTRH. Disordered stretches follow at residues 38–60 and 224–257; these read SSKA…GHKQ and AMNP…KGFR.

This sequence belongs to the universal ribosomal protein uL2 family. As to quaternary structure, part of the 50S ribosomal subunit. Forms a bridge to the 30S subunit in the 70S ribosome.

Its function is as follows. One of the primary rRNA binding proteins. Required for association of the 30S and 50S subunits to form the 70S ribosome, for tRNA binding and peptide bond formation. It has been suggested to have peptidyltransferase activity; this is somewhat controversial. Makes several contacts with the 16S rRNA in the 70S ribosome. The polypeptide is Large ribosomal subunit protein uL2 (Burkholderia pseudomallei (strain 1106a)).